A 568-amino-acid chain; its full sequence is C6 finger domain transcription factor BOA13 (568 aa).

The segment at residues 14–41 (CNECHASKVRCSGERTGCRRCVYNQQKC) is a DNA-binding region (zn(2)-C6 fungal-type). 3 disordered regions span residues 92 to 114 (EANG…EGIT), 207 to 278 (ATSS…HHNH), and 467 to 490 (RSRS…FSNP). Residues 242–259 (HSDLSEKQAQHAQNDLRW) are compositionally biased toward basic and acidic residues. The span at 260–274 (RSQSQSYKRPTISTQ) shows a compositional bias: polar residues. The span at 470 to 490 (SLSTPSPRNTPSTSNSPFSNP) shows a compositional bias: low complexity.

The protein localises to the nucleus. Functionally, transcription factor that probably regulates the gene clusters that mediates the biosynthesis of botcinin acid and its botcinin derivatives, acetate-derived polyketides that contribute to virulence when combined with the sesquiterpene botrydial. Botcinin acid and its derivatives have been shown to induce chlorosis and necrosis during host plant infection, but also have antifungal activities. This Botryotinia fuckeliana (strain B05.10) (Noble rot fungus) protein is C6 finger domain transcription factor BOA13.